A 113-amino-acid chain; its full sequence is Large ribosomal subunit protein bL19 (113 aa).

The protein belongs to the bacterial ribosomal protein bL19 family.

This protein is located at the 30S-50S ribosomal subunit interface and may play a role in the structure and function of the aminoacyl-tRNA binding site. This Mycobacterium leprae (strain Br4923) protein is Large ribosomal subunit protein bL19.